The chain runs to 351 residues: Pinopsin (351 aa).

Residues 1-30 (MSSNSSQAPPNGTPGPFDGPQWPYQAPQST) lie on the Extracellular side of the membrane. The N-linked (GlcNAc...) asparagine glycan is linked to asparagine 4. The chain crosses the membrane as a helical span at residues 31-55 (YVGVAVLMGTVVACASVVNGLVIVV). The Cytoplasmic segment spans residues 56–67 (SICYKKLRSPLN). Residues 68-92 (YILVNLAVADLLVTLCGSSVSLSNN) form a helical membrane-spanning segment. Over 93–107 (INGFFVFGRRMCELE) the chain is Extracellular. Cysteine 104 and cysteine 181 are disulfide-bonded. Residues 108-127 (GFMVSLTGIVGLWSLAILAL) traverse the membrane as a helical segment. Over 128–146 (ERYVVVCKPLGDFQFQRRH) the chain is Cytoplasmic. Residues 147–170 (AVSGCAFTWGWALLWSAPPLLGWS) form a helical membrane-spanning segment. Residues 171–194 (SYVPEGLRTSCGPNWYTGGSNNNS) are Extracellular-facing. The N-linked (GlcNAc...) asparagine glycan is linked to asparagine 192. Residues 195 to 222 (YILSLFVTCFVLPLSLILFSYTNLLLTL) traverse the membrane as a helical segment. Residues 223–244 (RAAAAQQKEADTTQRAEREVTR) lie on the Cytoplasmic side of the membrane. A helical transmembrane segment spans residues 245 to 268 (MVIVMVMAFLLCWLPYSTFALVVA). Residues 269–276 (THKGIIIQ) are Extracellular-facing. A helical transmembrane segment spans residues 277 to 301 (PVLASLPSYFSKTATVYNPIIYVFM). Lysine 288 bears the N6-(retinylidene)lysine mark. Residues 302 to 351 (NKQFQSCLLEMLCCGYQPQRTGKASPGTPGPHADVTAAGLRNKVMPAHPV) lie on the Cytoplasmic side of the membrane. Residues cysteine 314 and cysteine 315 are each lipidated (S-palmitoyl cysteine).

This sequence belongs to the G-protein coupled receptor 1 family. Opsin subfamily. Phosphorylated on some or all of the serine and threonine residues present in the C-terminal region. As to expression, pineal gland.

It localises to the membrane. In terms of biological role, produces a slow and prolonged phototransduction response consistent with the non-visual function of pineal photoreception. This chain is Pinopsin, found in Gallus gallus (Chicken).